We begin with the raw amino-acid sequence, 160 residues long: Cyanate hydratase (160 aa).

Catalysis depends on residues R100, E103, and S126.

This sequence belongs to the cyanase family.

It carries out the reaction cyanate + hydrogencarbonate + 3 H(+) = NH4(+) + 2 CO2. Catalyzes the reaction of cyanate with bicarbonate to produce ammonia and carbon dioxide. This chain is Cyanate hydratase, found in Aspergillus oryzae (strain ATCC 42149 / RIB 40) (Yellow koji mold).